Consider the following 1340-residue polypeptide: Lysine-specific demethylase ELF6 (1340 aa).

The 42-residue stretch at 16-57 (APVFRPTDTEFADPIAYISKIEKEASAFGICKIIPPLPKPSK) folds into the JmjN domain. The tract at residues 195–245 (QRKRRGRGFYQRKTENNDPSGKNGEKSSPEVEKAPLASTSLSSQDSSKQKN) is disordered. Positions 217-227 (NGEKSSPEVEK) are enriched in basic and acidic residues. In terms of domain architecture, JmjC spans 262 to 428 (NSSWNLQMIA…VAKEAAVRRA (167 aa)). H305, E307, and H396 together coordinate Fe cation. Residues 818–825 (GKKEEKII) carry the Nuclear localization signal 1 motif. The disordered stretch occupies residues 1092-1225 (GEPLESSDIL…SRQQEVPTTT (134 aa)). Polar residues predominate over residues 1099 to 1115 (DILSSSNGDEASSNGLQ). Over residues 1124–1133 (ESEVSSSENT) the composition is skewed to low complexity. A compositionally biased stretch (basic and acidic residues) spans 1188–1201 (SLKHTETSDEEKKP). The segment covering 1215–1225 (GSRQQEVPTTT) has biased composition (polar residues). C2H2-type zinc fingers lie at residues 1228–1250 (NRCY…THKR), 1251–1275 (NRCT…QRVH), 1281–1305 (FECS…LRLH), and 1311–1337 (YICK…KTMH). Zn(2+) is bound by residues C1230, C1235, H1248, C1253, C1258, H1265, H1271, H1275, C1283, C1288, H1301, H1305, C1313, C1318, H1331, and H1337. A Nuclear localization signal 2 motif is present at residues 1248-1255 (HKRNRCTH). The DNA-binding stretch occupies residues 1260–1333 (KKFRAHKYLV…FVSDYSRHRR (74 aa)).

The protein belongs to the JHDM3 histone demethylase family. Interacts with BZR2 (via N-terminus). In terms of tissue distribution, expressed at low levels in seedlings, cotyledons and leaves. Detected in inflorescences, stems, roots and siliques but not in shoot apical meristems or root tips. Accumulates in flowers and embryos.

Its subcellular location is the nucleus. The catalysed reaction is N(6),N(6),N(6)-trimethyl-L-lysyl(27)-[histone H3] + 2-oxoglutarate + O2 = N(6),N(6)-dimethyl-L-lysyl(27)-[histone H3] + formaldehyde + succinate + CO2. It carries out the reaction N(6),N(6)-dimethyl-L-lysyl(27)-[histone H3] + 2-oxoglutarate + O2 = N(6)-methyl-L-lysyl(27)-[histone H3] + formaldehyde + succinate + CO2. Functionally, histone demethylase that demethylates 'Lys-27' (H3K27me) of histone H3, thus acting as a positive regulator of gene expression. Demethylates tri-methylated (H3K27me3) and di-methylated (H3K27me2) H3K27me. Inactive on H3K27me1, H3K4me3, H3K9me2 and H3K36me3. Acts as a repressor of the photoperiodic flowering pathway and of FT. May also be active on H3K4me. Binds around the transcription start site of the FT locus. Required for epigenetic reprogramming by resetting the expression of the floral repressor FLC locus, thus aluviating cold-mediated FLC epigenetically silencing occurring during vernalization and preventing inapropriate epigenetic states inheritence. Together with REF6, required for H3K27me3 resetting (especially in constitutive heterochromatin within the pericentromeric regions) and transgenerational inheritance of histone marks, thus acting in safeguarding genome and epigenome integrity during sexual reproduction. The chain is Lysine-specific demethylase ELF6 from Arabidopsis thaliana (Mouse-ear cress).